Consider the following 237-residue polypeptide: ATP synthase subunit 4, mitochondrial (237 aa).

Residues 1–30 constitute a mitochondrion transit peptide; that stretch reads MFRALTLKASARPVVAGLCSRQAPIAAVRY.

The protein belongs to the eukaryotic ATPase B chain family.

Its subcellular location is the mitochondrion. The protein resides in the mitochondrion inner membrane. Mitochondrial membrane ATP synthase (F(1)F(0) ATP synthase or Complex V) produces ATP from ADP in the presence of a proton gradient across the membrane which is generated by electron transport complexes of the respiratory chain. F-type ATPases consist of two structural domains, F(1) - containing the extramembraneous catalytic core, and F(0) - containing the membrane proton channel, linked together by a central stalk and a peripheral stalk. During catalysis, ATP synthesis in the catalytic domain of F(1) is coupled via a rotary mechanism of the central stalk subunits to proton translocation. Part of the complex F(0) domain and the peripheric stalk, which acts as a stator to hold the catalytic alpha(3)beta(3) subcomplex and subunit a/ATP6 static relative to the rotary elements. The sequence is that of ATP synthase subunit 4, mitochondrial (ATP4) from Kluyveromyces lactis (strain ATCC 8585 / CBS 2359 / DSM 70799 / NBRC 1267 / NRRL Y-1140 / WM37) (Yeast).